The sequence spans 211 residues: ATP phosphoribosyltransferase (211 aa).

The protein belongs to the ATP phosphoribosyltransferase family. Short subfamily. Heteromultimer composed of HisG and HisZ subunits.

It is found in the cytoplasm. The enzyme catalyses 1-(5-phospho-beta-D-ribosyl)-ATP + diphosphate = 5-phospho-alpha-D-ribose 1-diphosphate + ATP. The protein operates within amino-acid biosynthesis; L-histidine biosynthesis; L-histidine from 5-phospho-alpha-D-ribose 1-diphosphate: step 1/9. Catalyzes the condensation of ATP and 5-phosphoribose 1-diphosphate to form N'-(5'-phosphoribosyl)-ATP (PR-ATP). Has a crucial role in the pathway because the rate of histidine biosynthesis seems to be controlled primarily by regulation of HisG enzymatic activity. This chain is ATP phosphoribosyltransferase, found in Lacticaseibacillus paracasei (strain ATCC 334 / BCRC 17002 / CCUG 31169 / CIP 107868 / KCTC 3260 / NRRL B-441) (Lactobacillus paracasei).